A 159-amino-acid chain; its full sequence is Phosphopantetheine adenylyltransferase (159 aa).

Ser8 contacts substrate. ATP-binding positions include 8–9 (SF) and His16. Residues Lys40, Leu72, and Arg86 each contribute to the substrate site. Residues 87 to 89 (GLR), Glu97, and 122 to 128 (YSFISSS) contribute to the ATP site.

The protein belongs to the bacterial CoaD family. Homohexamer. Mg(2+) serves as cofactor.

Its subcellular location is the cytoplasm. The enzyme catalyses (R)-4'-phosphopantetheine + ATP + H(+) = 3'-dephospho-CoA + diphosphate. Its pathway is cofactor biosynthesis; coenzyme A biosynthesis; CoA from (R)-pantothenate: step 4/5. Its function is as follows. Reversibly transfers an adenylyl group from ATP to 4'-phosphopantetheine, yielding dephospho-CoA (dPCoA) and pyrophosphate. The sequence is that of Phosphopantetheine adenylyltransferase from Thermosipho melanesiensis (strain DSM 12029 / CIP 104789 / BI429).